Consider the following 656-residue polypeptide: Fidgetin-like protein 1 (656 aa).

Residues 293–302 (KYSNQPQRNP) show a composition bias toward polar residues. The segment at 293–354 (KYSNQPQRNP…QGNSEMNAPS (62 aa)) is disordered. Residues 331-340 (RQEDVQDSNR) show a composition bias toward basic and acidic residues. ATP contacts are provided by residues Ala386 and 426–431 (GTGKTL).

Belongs to the AAA ATPase family. Hexamer. Mg(2+) serves as cofactor.

The protein localises to the nucleus. The protein resides in the cytoplasm. It localises to the perinuclear region. It catalyses the reaction ATP + H2O = ADP + phosphate + H(+). May be involved in DNA double-strand break (DBS) repair via homologous recombination (HR). May regulate osteoblast proliferation and differentiation. This is Fidgetin-like protein 1 (fignl1) from Xenopus tropicalis (Western clawed frog).